A 453-amino-acid chain; its full sequence is Bifunctional protein GlmU (453 aa).

A pyrophosphorylase region spans residues 1–226; that stretch reads MKFSAVILAA…AIEVEGVNDR (226 aa). Residues 8-11, lysine 22, glutamine 73, 78-79, 100-102, glycine 137, glutamate 151, asparagine 166, and asparagine 224 contribute to the UDP-N-acetyl-alpha-D-glucosamine site; these read LAAG, GT, and YGD. A Mg(2+)-binding site is contributed by aspartate 102. Asparagine 224 contacts Mg(2+). Positions 227-247 are linker; the sequence is AQLARLERAFQSMQAQKLLEQ. The tract at residues 248–453 is N-acetyltransferase; that stretch reads GVMLRDPARF…TGWQRPVKQK (206 aa). UDP-N-acetyl-alpha-D-glucosamine contacts are provided by arginine 330 and lysine 348. Histidine 360 acts as the Proton acceptor in catalysis. 2 residues coordinate UDP-N-acetyl-alpha-D-glucosamine: tyrosine 363 and asparagine 374. Residues alanine 377, 383 to 384, serine 402, alanine 420, and arginine 437 each bind acetyl-CoA; that span reads NY.

It in the N-terminal section; belongs to the N-acetylglucosamine-1-phosphate uridyltransferase family. In the C-terminal section; belongs to the transferase hexapeptide repeat family. As to quaternary structure, homotrimer. Requires Mg(2+) as cofactor.

It localises to the cytoplasm. It carries out the reaction alpha-D-glucosamine 1-phosphate + acetyl-CoA = N-acetyl-alpha-D-glucosamine 1-phosphate + CoA + H(+). The enzyme catalyses N-acetyl-alpha-D-glucosamine 1-phosphate + UTP + H(+) = UDP-N-acetyl-alpha-D-glucosamine + diphosphate. It functions in the pathway nucleotide-sugar biosynthesis; UDP-N-acetyl-alpha-D-glucosamine biosynthesis; N-acetyl-alpha-D-glucosamine 1-phosphate from alpha-D-glucosamine 6-phosphate (route II): step 2/2. The protein operates within nucleotide-sugar biosynthesis; UDP-N-acetyl-alpha-D-glucosamine biosynthesis; UDP-N-acetyl-alpha-D-glucosamine from N-acetyl-alpha-D-glucosamine 1-phosphate: step 1/1. Its pathway is bacterial outer membrane biogenesis; LPS lipid A biosynthesis. In terms of biological role, catalyzes the last two sequential reactions in the de novo biosynthetic pathway for UDP-N-acetylglucosamine (UDP-GlcNAc). The C-terminal domain catalyzes the transfer of acetyl group from acetyl coenzyme A to glucosamine-1-phosphate (GlcN-1-P) to produce N-acetylglucosamine-1-phosphate (GlcNAc-1-P), which is converted into UDP-GlcNAc by the transfer of uridine 5-monophosphate (from uridine 5-triphosphate), a reaction catalyzed by the N-terminal domain. This chain is Bifunctional protein GlmU, found in Vibrio parahaemolyticus serotype O3:K6 (strain RIMD 2210633).